Consider the following 427-residue polypeptide: Glutamate-1-semialdehyde 2,1-aminomutase (427 aa).

Lysine 265 is modified (N6-(pyridoxal phosphate)lysine).

The protein belongs to the class-III pyridoxal-phosphate-dependent aminotransferase family. HemL subfamily. As to quaternary structure, homodimer. Pyridoxal 5'-phosphate is required as a cofactor.

The protein resides in the cytoplasm. The enzyme catalyses (S)-4-amino-5-oxopentanoate = 5-aminolevulinate. It functions in the pathway porphyrin-containing compound metabolism; protoporphyrin-IX biosynthesis; 5-aminolevulinate from L-glutamyl-tRNA(Glu): step 2/2. The polypeptide is Glutamate-1-semialdehyde 2,1-aminomutase (Actinobacillus succinogenes (strain ATCC 55618 / DSM 22257 / CCUG 43843 / 130Z)).